Consider the following 201-residue polypeptide: Small ribosomal subunit protein uS4c (201 aa).

Positions 15–44 (LGALPGLTSKRPKTGNDLKNQSRSGKKSQY) are disordered. The region spanning 89–150 (MRLDNILFRL…EKKSRTLIQN (62 aa)) is the S4 RNA-binding domain.

Belongs to the universal ribosomal protein uS4 family. In terms of assembly, part of the 30S ribosomal subunit. Contacts protein S5. The interaction surface between S4 and S5 is involved in control of translational fidelity.

The protein localises to the plastid. It is found in the chloroplast. Functionally, one of the primary rRNA binding proteins, it binds directly to 16S rRNA where it nucleates assembly of the body of the 30S subunit. With S5 and S12 plays an important role in translational accuracy. The sequence is that of Small ribosomal subunit protein uS4c (rps4) from Cucumis sativus (Cucumber).